A 189-amino-acid polypeptide reads, in one-letter code: Elongation factor P 2 (189 aa).

Belongs to the elongation factor P family.

It is found in the cytoplasm. It functions in the pathway protein biosynthesis; polypeptide chain elongation. In terms of biological role, involved in peptide bond synthesis. Stimulates efficient translation and peptide-bond synthesis on native or reconstituted 70S ribosomes in vitro. Probably functions indirectly by altering the affinity of the ribosome for aminoacyl-tRNA, thus increasing their reactivity as acceptors for peptidyl transferase. This is Elongation factor P 2 from Lactobacillus acidophilus (strain ATCC 700396 / NCK56 / N2 / NCFM).